A 557-amino-acid chain; its full sequence is Potassium-transporting ATPase potassium-binding subunit (557 aa).

The next 10 helical transmembrane spans lie at 4 to 24 (LGAGLLQAGLLLLLLAAVHVP), 61 to 81 (TYALSVLGFSTVSILFLYAFL), 131 to 151 (GLTVQNFLSAAVGLAVAVALV), 174 to 194 (LRVLLPLAFAGAVLLLLTGVV), 253 to 273 (LEVFLILVIPFSLPRAFGTLV), 280 to 300 (LAVLSVMGTIFGASLALTTWA), 375 to 395 (GLYGMLVLAVITVFVAGLMVG), 412 to 432 (CAALYVLVTPAVLLTGTAVAL), 483 to 503 (LAIWLGRFLPMVLVLALAGAF), and 528 to 548 (LAVVVVVSALTFFPALALGPI).

Belongs to the KdpA family. As to quaternary structure, the system is composed of three essential subunits: KdpA, KdpB and KdpC.

It is found in the cell membrane. Functionally, part of the high-affinity ATP-driven potassium transport (or Kdp) system, which catalyzes the hydrolysis of ATP coupled with the electrogenic transport of potassium into the cytoplasm. This subunit binds the extracellular potassium ions and delivers the ions to the membrane domain of KdpB through an intramembrane tunnel. The chain is Potassium-transporting ATPase potassium-binding subunit from Kineococcus radiotolerans (strain ATCC BAA-149 / DSM 14245 / SRS30216).